Consider the following 489-residue polypeptide: Dipeptide and tripeptide permease B (489 aa).

Over Met-1–Arg-27 the chain is Cytoplasmic. The chain crosses the membrane as a helical span at residues Phe-28–Ser-48. Topologically, residues Gln-49–Ala-52 are periplasmic. Residues Phe-53–Val-73 form a helical membrane-spanning segment. The Cytoplasmic segment spans residues Gly-74–Arg-82. Residues Thr-83 to Leu-103 form a helical membrane-spanning segment. The Periplasmic portion of the chain corresponds to Lys-104–Asp-106. Residues Leu-107–Ala-127 form a helical membrane-spanning segment. The Cytoplasmic segment spans residues Ser-128–Thr-146. The chain crosses the membrane as a helical span at residues Leu-147–Ala-167. Topologically, residues Asp-168 to Tyr-172 are periplasmic. A helical transmembrane segment spans residues Ser-173–Cys-193. Over Arg-194–Ser-210 the chain is Cytoplasmic. Residues Phe-211–Leu-231 traverse the membrane as a helical segment. Over Met-232–His-233 the chain is Periplasmic. Residues Asn-234–Phe-254 form a helical membrane-spanning segment. The Cytoplasmic portion of the chain corresponds to Arg-255–Lys-267. A helical membrane pass occupies residues Met-268 to Met-288. Over Pro-289–Pro-311 the chain is Periplasmic. A helical membrane pass occupies residues Val-312 to Ile-332. Residues Tyr-333 to Thr-350 are Cytoplasmic-facing. The helical transmembrane segment at Leu-351–Ala-371 threads the bilayer. Over Asp-372 to Trp-380 the chain is Periplasmic. A helical membrane pass occupies residues Phe-381–Leu-401. Residues Ala-402–His-411 lie on the Cytoplasmic side of the membrane. A helical transmembrane segment spans residues Leu-412–Gly-432. The Periplasmic segment spans residues Tyr-433–Asn-456. Residues Val-457–Pro-477 traverse the membrane as a helical segment. At Trp-478–His-489 the chain is on the cytoplasmic side.

This sequence belongs to the major facilitator superfamily. Proton-dependent oligopeptide transporter (POT/PTR) (TC 2.A.17) family. DtpB subfamily.

Its subcellular location is the cell inner membrane. In terms of biological role, proton-dependent permease that transports di- and tripeptides. This Shigella dysenteriae serotype 1 (strain Sd197) protein is Dipeptide and tripeptide permease B.